A 295-amino-acid polypeptide reads, in one-letter code: Small ribosomal subunit protein uS2 (295 aa).

This sequence belongs to the universal ribosomal protein uS2 family. In terms of assembly, component of the small ribosomal subunit. Mature ribosomes consist of a small (40S) and a large (60S) subunit. The 40S subunit contains about 33 different proteins and 1 molecule of RNA (18S). The 60S subunit contains about 49 different proteins and 3 molecules of RNA (25S, 5.8S and 5S). Interacts with RPS21.

It is found in the cytoplasm. Its function is as follows. Required for the assembly and/or stability of the 40S ribosomal subunit. Required for the processing of the 20S rRNA-precursor to mature 18S rRNA in a late step of the maturation of 40S ribosomal subunits. In Paracoccidioides brasiliensis (strain Pb03), this protein is Small ribosomal subunit protein uS2.